A 141-amino-acid polypeptide reads, in one-letter code: Large ribosomal subunit protein uL11 (141 aa).

It belongs to the universal ribosomal protein uL11 family. Part of the ribosomal stalk of the 50S ribosomal subunit. Interacts with L10 and the large rRNA to form the base of the stalk. L10 forms an elongated spine to which L12 dimers bind in a sequential fashion forming a multimeric L10(L12)X complex. Post-translationally, one or more lysine residues are methylated.

Forms part of the ribosomal stalk which helps the ribosome interact with GTP-bound translation factors. The protein is Large ribosomal subunit protein uL11 of Roseiflexus castenholzii (strain DSM 13941 / HLO8).